The sequence spans 127 residues: Putative B3 domain-containing protein At4g12617 (127 aa).

Positions 35–127 form a DNA-binding region, TF-B3; that stretch reads IMMPKTLLEA…HTRLNFKHVA (93 aa).

The protein resides in the nucleus. This Arabidopsis thaliana (Mouse-ear cress) protein is Putative B3 domain-containing protein At4g12617.